Consider the following 94-residue polypeptide: uncharacterized protein (94 aa).

The HTH cro/C1-type domain maps to 13-67; it reads IQESLDELNVSLREFARAMEIAPSTASRLLTGKAALTPEMAIKLSVVIGSSPQMW. Residues 24-43 constitute a DNA-binding region (H-T-H motif); the sequence is LREFARAMEIAPSTASRLLT.

It belongs to the VapA/VapI family.

This is an uncharacterized protein from Escherichia coli (strain K12).